A 368-amino-acid chain; its full sequence is DNA replication and repair protein RecF (368 aa).

30 to 37 (GRNGSGKT) is a binding site for ATP.

It belongs to the RecF family.

Its subcellular location is the cytoplasm. In terms of biological role, the RecF protein is involved in DNA metabolism; it is required for DNA replication and normal SOS inducibility. RecF binds preferentially to single-stranded, linear DNA. It also seems to bind ATP. The sequence is that of DNA replication and repair protein RecF from Chlorobaculum tepidum (strain ATCC 49652 / DSM 12025 / NBRC 103806 / TLS) (Chlorobium tepidum).